A 348-amino-acid chain; its full sequence is Protein RecA (348 aa).

65–72 (GPESSGKT) provides a ligand contact to ATP. Residues 326–348 (QMGSESLSSSSDDDDIKEESGEE) form a disordered region. The span at 336-348 (SDDDDIKEESGEE) shows a compositional bias: acidic residues.

Belongs to the RecA family.

It localises to the cytoplasm. Can catalyze the hydrolysis of ATP in the presence of single-stranded DNA, the ATP-dependent uptake of single-stranded DNA by duplex DNA, and the ATP-dependent hybridization of homologous single-stranded DNAs. It interacts with LexA causing its activation and leading to its autocatalytic cleavage. This chain is Protein RecA, found in Campylobacter hominis (strain ATCC BAA-381 / DSM 21671 / CCUG 45161 / LMG 19568 / NCTC 13146 / CH001A).